We begin with the raw amino-acid sequence, 584 residues long: 4-hydroxybenzoate decarboxylase subunit C (584 aa).

Belongs to the UbiD family. As to quaternary structure, component of the decarboxylase complex composed of the subunits B and C (Potential). The subunit D usually found in other organisms seems to be absent.

It catalyses the reaction 4-hydroxybenzoate + H(+) = phenol + CO2. With respect to regulation, the enzyme activity is enhanced by Mg(2+), Fe(2+), Mn(2+) and Ca(2+). No stimulation is observed with Cu(2+) and Zn(2+). Its function is as follows. Catalyzes the reversible decarboxylation of 4-hydroxybenzoate. The chain is 4-hydroxybenzoate decarboxylase subunit C from Chlamydia pneumoniae (Chlamydophila pneumoniae).